Here is a 1041-residue protein sequence, read N- to C-terminus: Importin-9 (1041 aa).

A2 is modified (N-acetylalanine). The 77-residue stretch at 43–119 (AEEQIKVLEV…RELLPNGLRE (77 aa)) folds into the Importin N-terminal domain. A disordered region spans residues 936–967 (QATPAEWNQDDSNDMWEDQEEEEEEEEDGLAG). Residues 943 to 964 (NQDDSNDMWEDQEEEEEEEEDG) are compositionally biased toward acidic residues.

It belongs to the importin beta family. In terms of assembly, interacts with histones H2A, H2B, H3 and H4. The binding is coupled to RanGTP cycles. Interacts with AKIRIN2; promoting association with pre-assembled proteasomes. Associates with pre-assembled proteasomes; interaction is indirect and mediated via interaction with AKIRIN2. Interacts with PPP2R1A and PPP2R1B.

It localises to the cytoplasm. It is found in the nucleus. Its function is as follows. Nuclear transport receptor that mediates nuclear import of proteins, such as histones, proteasome and actin. Serves as receptor for nuclear localization signals (NLS) in cargo substrates. Is thought to mediate docking of the importin/substrate complex to the nuclear pore complex (NPC) through binding to nucleoporin and the complex is subsequently translocated through the pore by an energy requiring, Ran-dependent mechanism. At the nucleoplasmic side of the NPC, Ran binds to the importin, the importin/substrate complex dissociates and importin is re-exported from the nucleus to the cytoplasm where GTP hydrolysis releases Ran. The directionality of nuclear import is thought to be conferred by an asymmetric distribution of the GTP- and GDP-bound forms of Ran between the cytoplasm and nucleus. Mediates the import of pre-assembled proteasomes into the nucleus; AKIRIN2 acts as a molecular bridge between IPO9 and the proteasome complex. Mediates the nuclear import of histones H2A, H2B, H4 and H4. In addition to nuclear import, also acts as a chaperone for histones by preventing inappropriate non-nucleosomal interactions. Mediates the nuclear import of actin. The polypeptide is Importin-9 (Mus musculus (Mouse)).